A 381-amino-acid polypeptide reads, in one-letter code: S-(hydroxymethyl)glutathione dehydrogenase (381 aa).

C49 is a binding site for Zn(2+). Residue H50 participates in NAD(+) binding. Zn(2+)-binding residues include H71, E72, C101, C104, C107, C115, and C178. Residues 203–208 (GGGIVG), D227, and 298–300 (IGV) each bind NAD(+).

This sequence belongs to the zinc-containing alcohol dehydrogenase family. Class-III subfamily. Zn(2+) serves as cofactor.

It carries out the reaction a primary alcohol + NAD(+) = an aldehyde + NADH + H(+). It catalyses the reaction a secondary alcohol + NAD(+) = a ketone + NADH + H(+). The catalysed reaction is S-(hydroxymethyl)glutathione + NADP(+) = S-formylglutathione + NADPH + H(+). The enzyme catalyses S-(hydroxymethyl)glutathione + NAD(+) = S-formylglutathione + NADH + H(+). It carries out the reaction S-nitrosoglutathione + NADH + H(+) = S-(hydroxysulfenamide)glutathione + NAD(+). In terms of biological role, oxidizes long-chain alcohols and, in the presence of glutathione, is able to oxidize formaldehyde. Also acts as a S-nitroso-glutathione reductase by catalyzing the NADH-dependent reduction of S-nitrosoglutathione, thereby regulating protein S-nitrosylation. This Candida maltosa (Yeast) protein is S-(hydroxymethyl)glutathione dehydrogenase (FDH1).